Here is a 206-residue protein sequence, read N- to C-terminus: MVVQDKWKRKATLAYKKKHDIHDAPVKPRKKNLGNNEWRFKNAGEYFDEDNNEEEYPSLESLKTVGNGDTIQDEEEDFEYSKLQARPLTGLGISNQKPKSKVRTIQREEVADMLESVEHEKSIQEFRKRYNVQKPKVNISHAEAEEDIDSFLESMDQSAPPSITEDKGENYISSNHSSMHISRNDSRNYMSEKPNKDQSWLDELLR.

The interval 128–206 (KRYNVQKPKV…DQSWLDELLR (79 aa)) is disordered. Polar residues predominate over residues 171–181 (YISSNHSSMHI).

It localises to the cytoplasm. It is found in the nucleus. This is an uncharacterized protein from Schizosaccharomyces pombe (strain 972 / ATCC 24843) (Fission yeast).